Reading from the N-terminus, the 90-residue chain is UPF0298 protein YlbG (90 aa).

The protein belongs to the UPF0298 family.

It is found in the cytoplasm. The polypeptide is UPF0298 protein YlbG (ylbG) (Bacillus subtilis (strain 168)).